A 259-amino-acid polypeptide reads, in one-letter code: 1,2-dihydroxy-1,2-dihydronaphthalene dehydrogenase (259 aa).

Residue 8-32 participates in NAD(+) binding; it reads SITGAGSGIGLELVRSFKSAGYYVS. Position 140 (S140) interacts with substrate. Catalysis depends on Y153, which acts as the Proton acceptor.

This sequence belongs to the short-chain dehydrogenases/reductases (SDR) family.

It carries out the reaction (1R,2S)-1,2-dihydronaphthalene-1,2-diol + NAD(+) = naphthalene-1,2-diol + NADH + H(+). It catalyses the reaction cis-1,2-dihydroxy-1,2-dihydrodibenzothiophene + NAD(+) = 1,2-dihydroxydibenzothiophene + NADH + H(+). It participates in aromatic compound metabolism; naphthalene degradation. Catalyzes the oxidation of naphthalene dihydrodiol into 1,2-dihydroxynaphthalene. The protein is 1,2-dihydroxy-1,2-dihydronaphthalene dehydrogenase (doxE) of Pseudomonas sp. (strain C18).